Reading from the N-terminus, the 305-residue chain is Oxygen-dependent coproporphyrinogen-III oxidase (305 aa).

Ser98 provides a ligand contact to substrate. His102 and His112 together coordinate a divalent metal cation. His112 functions as the Proton donor in the catalytic mechanism. 114–116 (NVR) contacts substrate. Residues His151 and His181 each coordinate a divalent metal cation. The segment at 246 to 281 (YVEFNLVYDRGTLFGLQSGGRTESILMSMPPLARWE) is important for dimerization. Residue 264-266 (GGR) coordinates substrate.

Belongs to the aerobic coproporphyrinogen-III oxidase family. As to quaternary structure, homodimer. A divalent metal cation serves as cofactor.

It localises to the cytoplasm. The catalysed reaction is coproporphyrinogen III + O2 + 2 H(+) = protoporphyrinogen IX + 2 CO2 + 2 H2O. It functions in the pathway porphyrin-containing compound metabolism; protoporphyrin-IX biosynthesis; protoporphyrinogen-IX from coproporphyrinogen-III (O2 route): step 1/1. In terms of biological role, involved in the heme biosynthesis. Catalyzes the aerobic oxidative decarboxylation of propionate groups of rings A and B of coproporphyrinogen-III to yield the vinyl groups in protoporphyrinogen-IX. The sequence is that of Oxygen-dependent coproporphyrinogen-III oxidase from Vibrio vulnificus (strain YJ016).